We begin with the raw amino-acid sequence, 637 residues long: Protein arginine N-methyltransferase 5 (637 aa).

Ala-2 is modified (N-acetylalanine; in Protein arginine N-methyltransferase 5, N-terminally processed). Residues 13 to 292 (RVSSGRDLNC…YLEYLSQNRP (280 aa)) are TIM barrel. The region spanning 308–615 (LQSPLQPLMD…SNSKKVWYEW (308 aa)) is the SAM-dependent MTase PRMT-type domain. Position 324 (Tyr-324) interacts with S-adenosyl-L-methionine. Residue Phe-327 participates in a protein binding. S-adenosyl-L-methionine-binding positions include 333 to 334 (KY), Glu-392, and 419 to 420 (DM). A protein is bound by residues Glu-435 and Glu-444. Residues Glu-435 and Glu-444 each act as proton donor/acceptor in the active site. The tract at residues 465-637 (PGEYTSFLAP…PTGRSYTIGL (173 aa)) is beta barrel. Residues 488-494 (REKDRDP) form a dimerization region.

The protein belongs to the class I-like SAM-binding methyltransferase superfamily. Protein arginine N-methyltransferase family. In terms of assembly, forms, at least, homodimers and homotetramers. Component of the methylosome complex, composed of PRMT5, WDR77 and CLNS1A. Found in a complex composed of PRMT5, WDR77 and RIOK1. RIOK1 and CLNS1A associate with PRMT5 in a mutually exclusive fashion, which allows the recruitment of distinct methylation substrates, such as nucleolin/NCL and Sm proteins, respectively. Interacts with PRDM1. Identified in a complex composed of methylosome and PRMT1 and ERH. Interacts with EGFR; methylates EGFR and stimulates EGFR-mediated ERK activation. Interacts with HOXA9. Interacts with SRGAP2. Found in a complex with COPRS, RUNX1 and CBFB. Interacts with CHTOP; the interaction symmetrically methylates CHTOP, but seems to require the presence of PRMT1. Interacts with EPB41L3; this modulates methylation of target proteins. Component of a high molecular weight E2F-pocket protein complex, CERC (cyclin E1 repressor complex). Associates with SWI/SNF remodeling complexes containing SMARCA2 and SMARCA4. Interacts with JAK2, SSTR1, SUPT5H, BRAF and with active RAF1. Interacts with LSM11, PRMT7 and SNRPD3. Interacts with COPRS; promoting its recruitment on histone H4. Interacts with CLNS1A/pICln. Identified in a complex with CLNS1A/pICln and Sm proteins. Interacts with RPS10. Interacts with WDR77. Interacts with IWS1. Interacts with CRY1. Interacts with POLR2A. Interacts with SMN1/SMN2. Interacts with LYAR; this interaction is direct. Interacts with TTC5/STRAP; this interaction is DNA damage-dependent and promotes PRMT5 interaction with p53/TP53. Interacts with p53/TP53 in response to DNA damage; the interaction is TTC5/STRAP dependent. Interacts with FAM47E; the interaction is direct, promotes PRMT5 localization to chromatin, and does not disrupt its association with WDR77 or STUB1. Interacts with TDRD6. Interacts with STUB1. Interacts with MBD2. Does not interact with MBD3. As to expression, ubiquitous.

Its subcellular location is the cytoplasm. The protein resides in the nucleus. It is found in the chromosome. The protein localises to the golgi apparatus. The catalysed reaction is L-arginyl-[protein] + 2 S-adenosyl-L-methionine = N(omega),N(omega)'-dimethyl-L-arginyl-[protein] + 2 S-adenosyl-L-homocysteine + 2 H(+). Activity is increased by EGF, HGF, FGF1 or FGF2 treatments, and slightly decreased by NGF treatment. Its function is as follows. Arginine methyltransferase that can both catalyze the formation of omega-N monomethylarginine (MMA) and symmetrical dimethylarginine (sDMA), with a preference for the formation of MMA. Specifically mediates the symmetrical dimethylation of arginine residues in the small nuclear ribonucleoproteins Sm D1 (SNRPD1) and Sm D3 (SNRPD3); such methylation being required for the assembly and biogenesis of snRNP core particles. Methylates SUPT5H and may regulate its transcriptional elongation properties. May methylate the N-terminal region of MBD2. Mono- and dimethylates arginine residues of myelin basic protein (MBP) in vitro. May play a role in cytokine-activated transduction pathways. Negatively regulates cyclin E1 promoter activity and cellular proliferation. Methylates histone H2A and H4 'Arg-3' during germ cell development. Methylates histone H3 'Arg-8', which may repress transcription. Methylates the Piwi proteins (PIWIL1, PIWIL2 and PIWIL4), methylation of Piwi proteins being required for the interaction with Tudor domain-containing proteins and subsequent localization to the meiotic nuage. Methylates RPS10. Attenuates EGF signaling through the MAPK1/MAPK3 pathway acting at 2 levels. First, monomethylates EGFR; this enhances EGFR 'Tyr-1197' phosphorylation and PTPN6 recruitment, eventually leading to reduced SOS1 phosphorylation. Second, methylates RAF1 and probably BRAF, hence destabilizing these 2 signaling proteins and reducing their catalytic activity. Required for induction of E-selectin and VCAM-1, on the endothelial cells surface at sites of inflammation. Methylates HOXA9. Methylates and regulates SRGAP2 which is involved in cell migration and differentiation. Acts as a transcriptional corepressor in CRY1-mediated repression of the core circadian component PER1 by regulating the H4R3 dimethylation at the PER1 promoter. Methylates GM130/GOLGA2, regulating Golgi ribbon formation. Methylates H4R3 in genes involved in glioblastomagenesis in a CHTOP- and/or TET1-dependent manner. Symmetrically methylates POLR2A, a modification that allows the recruitment to POLR2A of proteins including SMN1/SMN2 and SETX. This is required for resolving RNA-DNA hybrids created by RNA polymerase II, that form R-loop in transcription terminal regions, an important step in proper transcription termination. Along with LYAR, binds the promoter of gamma-globin HBG1/HBG2 and represses its expression. Symmetrically methylates NCL. Methylates p53/TP53; methylation might possibly affect p53/TP53 target gene specificity. Involved in spliceosome maturation and mRNA splicing in prophase I spermatocytes through the catalysis of the symmetrical arginine dimethylation of SNRPB (small nuclear ribonucleoprotein-associated protein) and the interaction with tudor domain-containing protein TDRD6. The protein is Protein arginine N-methyltransferase 5 (PRMT5) of Homo sapiens (Human).